A 1528-amino-acid chain; its full sequence is Intraflagellar transport protein 121 (1528 aa).

WD repeat units follow at residues 123–170 (SNRA…GSAP), 244–285 (SSMP…SSVS), 619–667 (PSLT…SEFL), and 759–798 (PELIGIWGLVFSPEDPNLVAVSSQYKVIVFHLDTQTREDS). A disordered region spans residues 914–933 (DSGLDVTASNSSQPSTQTSQ). A compositionally biased stretch (low complexity) spans 920–933 (TASNSSQPSTQTSQ).

The protein resides in the cell projection. It localises to the cilium. Its subcellular location is the flagellum. The protein localises to the cytoplasm. It is found in the cytoskeleton. The protein resides in the flagellum axoneme. It localises to the flagellum basal body. Component of the intraflagellar transport complex A (IFT-A) involved in flagellar assembly. This chain is Intraflagellar transport protein 121, found in Giardia intestinalis (strain ATCC 50803 / WB clone C6) (Giardia lamblia).